Reading from the N-terminus, the 410-residue chain is tRNA-guanine(15) transglycosylase (410 aa).

D87 acts as the Nucleophile in catalysis. Residues D122 and G187 each coordinate substrate.

This sequence belongs to the archaeosine tRNA-ribosyltransferase family. Requires Zn(2+) as cofactor.

The catalysed reaction is guanosine(15) in tRNA + 7-cyano-7-deazaguanine = 7-cyano-7-carbaguanosine(15) in tRNA + guanine. Its pathway is tRNA modification; archaeosine-tRNA biosynthesis. Functionally, exchanges the guanine residue with 7-cyano-7-deazaguanine (preQ0) at position 15 in the dihydrouridine loop (D-loop) of archaeal tRNAs. This chain is tRNA-guanine(15) transglycosylase, found in Nanoarchaeum equitans (strain Kin4-M).